The primary structure comprises 505 residues: Alpha-1-syntrophin (505 aa).

2 disordered regions span residues 1 to 24 and 40 to 75; these read MASG…AGAG and LTVS…AAPP. PH domains lie at 6–269 and 293–401; these read RAPR…AQIN and DIKQ…DGCH. Positions 9 to 18 are enriched in low complexity; it reads RTGLLELRAG. The PDZ domain maps to 87 to 170; the sequence is RVTVRKADAG…EVVLEVKYMK (84 aa). Phosphoserine is present on residues serine 101, serine 184, serine 189, serine 193, and serine 200. The segment at 183–212 is disordered; sequence TSVGWDSPPASPLQRQPSSPGPQTRNLSEA. Residues 195–209 are compositionally biased toward polar residues; it reads LQRQPSSPGPQTRNL. One can recognise an SU domain in the interval 449 to 505; it reads PFEKLQMSSDDGASLLFLDFGGAEGEIQLDLHSCPKTMVFIIHSFLSAKVTRLGLLA. Residues 483–505 are calmodulin-binding; sequence PKTMVFIIHSFLSAKVTRLGLLA.

This sequence belongs to the syntrophin family. As to quaternary structure, monomer and homodimer. Interacts with the dystrophin related protein DTNA; SGCG of the dystrophin glycoprotein complex; NOS1; GRB2; GA; TGFA; MAPK12 and the sodium channel proteins SCN4A and SCN5A. Interacts with the dystrophin protein DMD in a calmodulin dependent manner and with related protein UTRN; SGCA of the dystrophin glycoprotein complex; F-actin; calmodulin and with the other members of the syntrophin family SNTB1 and SNTB2. Interacts with MYOC; regulates muscle hypertrophy. Interacts with DTNB. Phosphorylated by CaM-kinase II. Phosphorylation may inhibit the interaction with DMD. Highly expressed in skeletal and cardiac muscle and is also detected in brain.

It localises to the cell membrane. Its subcellular location is the sarcolemma. It is found in the cell junction. The protein localises to the cytoplasm. The protein resides in the cytoskeleton. Functionally, adapter protein that binds to and probably organizes the subcellular localization of a variety of membrane proteins. May link various receptors to the actin cytoskeleton and the extracellular matrix via dystrophin glycoprotein complex. Plays an important role in synapse formation and in the organization of UTRN and acetylcholine receptors at the neuromuscular synapse. Binds to phosphatidylinositol 4,5-bisphosphate. The protein is Alpha-1-syntrophin (SNTA1) of Oryctolagus cuniculus (Rabbit).